Reading from the N-terminus, the 20-residue chain is Brevinin-1ITb (20 aa).

M8 is subject to Methionine sulfoxide; partial. A disulfide bond links C14 and C20.

This sequence belongs to the frog skin active peptide (FSAP) family. Brevinin subfamily. Expressed by the skin glands.

The protein resides in the secreted. Antimicrobial peptide. This chain is Brevinin-1ITb, found in Rana italica (Italian stream frog).